The following is a 294-amino-acid chain: 33 kDa chaperonin (294 aa).

Intrachain disulfides connect cysteine 236/cysteine 238 and cysteine 269/cysteine 272.

The protein belongs to the HSP33 family. Post-translationally, under oxidizing conditions two disulfide bonds are formed involving the reactive cysteines. Under reducing conditions zinc is bound to the reactive cysteines and the protein is inactive.

Its subcellular location is the cytoplasm. Redox regulated molecular chaperone. Protects both thermally unfolding and oxidatively damaged proteins from irreversible aggregation. Plays an important role in the bacterial defense system toward oxidative stress. This Desulfotalea psychrophila (strain LSv54 / DSM 12343) protein is 33 kDa chaperonin.